A 361-amino-acid polypeptide reads, in one-letter code: tRNA-specific 2-thiouridylase MnmA (361 aa).

ATP is bound by residues 8–15 (AMSGGVDS) and M34. The active-site Nucleophile is the C104. C104 and C202 are oxidised to a cystine. G128 is an ATP binding site. Positions 152 to 154 (KDQ) are interaction with tRNA. Catalysis depends on C202, which acts as the Cysteine persulfide intermediate. The interaction with tRNA stretch occupies residues 307 to 308 (RY).

This sequence belongs to the MnmA/TRMU family.

The protein localises to the cytoplasm. The catalysed reaction is S-sulfanyl-L-cysteinyl-[protein] + uridine(34) in tRNA + AH2 + ATP = 2-thiouridine(34) in tRNA + L-cysteinyl-[protein] + A + AMP + diphosphate + H(+). Functionally, catalyzes the 2-thiolation of uridine at the wobble position (U34) of tRNA, leading to the formation of s(2)U34. This Caldicellulosiruptor saccharolyticus (strain ATCC 43494 / DSM 8903 / Tp8T 6331) protein is tRNA-specific 2-thiouridylase MnmA.